The primary structure comprises 252 residues: Triosephosphate isomerase (252 aa).

A substrate-binding site is contributed by 10–12; the sequence is NWK. His-96 (electrophile) is an active-site residue. The active-site Proton acceptor is Glu-168. Substrate contacts are provided by residues Gly-174, Ser-214, and 235 to 236; that span reads GG.

This sequence belongs to the triosephosphate isomerase family. Homodimer.

It is found in the cytoplasm. The catalysed reaction is D-glyceraldehyde 3-phosphate = dihydroxyacetone phosphate. Its pathway is carbohydrate biosynthesis; gluconeogenesis. It participates in carbohydrate degradation; glycolysis; D-glyceraldehyde 3-phosphate from glycerone phosphate: step 1/1. Involved in the gluconeogenesis. Catalyzes stereospecifically the conversion of dihydroxyacetone phosphate (DHAP) to D-glyceraldehyde-3-phosphate (G3P). This is Triosephosphate isomerase from Lactobacillus delbrueckii subsp. bulgaricus (strain ATCC 11842 / DSM 20081 / BCRC 10696 / JCM 1002 / NBRC 13953 / NCIMB 11778 / NCTC 12712 / WDCM 00102 / Lb 14).